The primary structure comprises 1171 residues: Pesticidal crystal protein Cry1Ea (1171 aa).

The segment at E1094–Y1124 is disordered. Residues V1103 to P1117 are compositionally biased toward basic and acidic residues.

Belongs to the delta endotoxin family.

Promotes colloidosmotic lysis by binding to the midgut epithelial cells of many lepidopteran larvae including Spodoptera species. This chain is Pesticidal crystal protein Cry1Ea (cry1Ea), found in Bacillus thuringiensis subsp. kenyae.